Here is a 270-residue protein sequence, read N- to C-terminus: NAD kinase (270 aa).

Asp-57 serves as the catalytic Proton acceptor. NAD(+) contacts are provided by residues 57-58 (DG), 125-126 (NE), Arg-150, and Asn-227.

This sequence belongs to the NAD kinase family. A divalent metal cation serves as cofactor.

It is found in the cytoplasm. It catalyses the reaction NAD(+) + ATP = ADP + NADP(+) + H(+). Its function is as follows. Involved in the regulation of the intracellular balance of NAD and NADP, and is a key enzyme in the biosynthesis of NADP. Catalyzes specifically the phosphorylation on 2'-hydroxyl of the adenosine moiety of NAD to yield NADP. This is NAD kinase from Ureaplasma parvum serovar 3 (strain ATCC 700970).